The primary structure comprises 324 residues: MSRRRRFKGRDVHGIILLDKPGGITSNDALQQVKRIYNAAKAGHTGALDPLATGMLPICFGEATKFSQFLLDADKRYQVTARLGVRTDTSDSEGSVVSVRPVDVSEDQLAQALDKFRGDIMQVPSMFSALKHQGRPLYEYAREGIEIEREARPITIYSLELKAFSGEEISLEVHCSKGTYIRSLIDDLGELLGCGAHVIQLRRTQVACYPNDKMLNLEKLNEILDECREQGVPPRERLDQYLLPMDSAVYSLPEVNMPPVLAAYVTQGQAVMVPHAPIEGFVRMTVGPEAEFIGVGEIDDDGKVAPRRLVRIGGDMPDAEEQAE.

D49 acts as the Nucleophile in catalysis.

It belongs to the pseudouridine synthase TruB family. Type 1 subfamily.

It carries out the reaction uridine(55) in tRNA = pseudouridine(55) in tRNA. Functionally, responsible for synthesis of pseudouridine from uracil-55 in the psi GC loop of transfer RNAs. The polypeptide is tRNA pseudouridine synthase B (Tolumonas auensis (strain DSM 9187 / NBRC 110442 / TA 4)).